We begin with the raw amino-acid sequence, 141 residues long: Large-conductance mechanosensitive channel (141 aa).

A run of 2 helical transmembrane segments spans residues 16 to 36 (VVDLAVGVIIGGAFGKIVSSM) and 83 to 103 (GNFIQTVIDFTILAFVIFLMV).

It belongs to the MscL family. As to quaternary structure, homopentamer.

The protein resides in the cell inner membrane. Its function is as follows. Channel that opens in response to stretch forces in the membrane lipid bilayer. May participate in the regulation of osmotic pressure changes within the cell. The protein is Large-conductance mechanosensitive channel of Cytophaga hutchinsonii (strain ATCC 33406 / DSM 1761 / CIP 103989 / NBRC 15051 / NCIMB 9469 / D465).